Reading from the N-terminus, the 1081-residue chain is Dyslexia-associated protein KIAA0319 homolog (1081 aa).

Positions 1-22 are cleaved as a signal peptide; it reads MVSPPGVLSSLLLLAAMAGGSS. Residues 23 to 99 enclose the MANSC domain; that stretch reads QQCSEGRTYS…PRTTGPIRSY (77 aa). Topologically, residues 23–964 are extracellular; it reads QQCSEGRTYS…WDGESNCEWS (942 aa). Disordered stretches follow at residues 141–160, 168–216, and 228–298; these read LPFLGKDGGPEETAEYSDDY, LQPS…DLTP, and NEST…TTVE. 3 stretches are compositionally biased toward polar residues: residues 197–209, 228–253, and 283–298; these read ASATGDNSAASTE, NESTWSPTPRHSEMSSMWPSSVTASP, and HNPSPASLESSPTTVE. PKD domains follow at residues 345–436, 444–533, 539–629, 630–723, and 729–820; these read AVSA…VMPA, VAIV…IRGS, VANA…VQAE, NNQA…VKKE, and RAQA…VLPD. Residues asparagine 430 and asparagine 522 are each glycosylated (N-linked (GlcNAc...) asparagine). Residues 965-985 traverse the membrane as a helical segment; that stretch reads VFYVAALALTLTVLTGAVTWV. Topologically, residues 986-1081 are cytoplasmic; it reads CICCCRRRKR…VSFGYYSKDR (96 aa). The short motif at 1004-1007 is the Endocytosis signal element; that stretch reads YTIL.

As to quaternary structure, homodimer. Interacts with AP2M1; required for clathrin-mediated endocytosis. Post-translationally, N-glycosylated. O-glycosylated. In terms of processing, shedding of the extracellular domain and intramembrane cleavage produce several proteolytic products. The intramembrane cleavage releases a soluble cytoplasmic polypeptide that translocates to the nucleolus. As to expression, highly expressed during development in ventricular zone, intermediate zone, cortical plate, striatum, hippocampus, and brain stem.

Its subcellular location is the cell membrane. It is found in the early endosome membrane. Its function is as follows. Involved in neuronal migration during development of the cerebral neocortex. May function in a cell autonomous and a non-cell autonomous manner and play a role in appropriate adhesion between migrating neurons and radial glial fibers. May also regulate growth and differentiation of dendrites. This is Dyslexia-associated protein KIAA0319 homolog from Rattus norvegicus (Rat).